A 741-amino-acid chain; its full sequence is DNA ligase (741 aa).

Residues 78–82 (DADYD), 127–128 (SL), and Glu161 contribute to the NAD(+) site. Catalysis depends on Lys163, which acts as the N6-AMP-lysine intermediate. The NAD(+) site is built by Arg184, Glu219, Lys335, and Lys359. Zn(2+) is bound by residues Cys464, Cys467, Cys482, and Cys488. One can recognise a BRCT domain in the interval 662 to 741 (VGDSPVAGKT…DAWRVLAGLA (80 aa)).

It belongs to the NAD-dependent DNA ligase family. LigA subfamily. It depends on Mg(2+) as a cofactor. Requires Mn(2+) as cofactor.

The catalysed reaction is NAD(+) + (deoxyribonucleotide)n-3'-hydroxyl + 5'-phospho-(deoxyribonucleotide)m = (deoxyribonucleotide)n+m + AMP + beta-nicotinamide D-nucleotide.. In terms of biological role, DNA ligase that catalyzes the formation of phosphodiester linkages between 5'-phosphoryl and 3'-hydroxyl groups in double-stranded DNA using NAD as a coenzyme and as the energy source for the reaction. It is essential for DNA replication and repair of damaged DNA. This chain is DNA ligase, found in Dinoroseobacter shibae (strain DSM 16493 / NCIMB 14021 / DFL 12).